A 238-amino-acid polypeptide reads, in one-letter code: CD63 antigen (238 aa).

At 2 to 11 (AVEGGMKCVK) the chain is on the cytoplasmic side. Residues 12-32 (FLLYVLLLAFCACAVGLIAVG) form a helical membrane-spanning segment. Residues 33–51 (VGAQLVLSQTIIQGATPGS) are Extracellular-facing. Residues 52 to 72 (LLPVVIIAVGVFLFLVAFVGC) form a helical membrane-spanning segment. Residues 73–81 (CGACKENYC) lie on the Cytoplasmic side of the membrane. The helical transmembrane segment at 82 to 102 (LMITFAIFLSLIMLVEVAAAI) threads the bilayer. At 103 to 203 (AGYVFRDKVM…KIGGWLRKNV (101 aa)) the chain is on the extracellular side. N-linked (GlcNAc...) asparagine glycans are attached at residues Asn-130, Asn-150, and Asn-172. The helical transmembrane segment at 204 to 224 (LVVAAAALGIAFVEVLGIVFA) threads the bilayer. Residues 225 to 238 (CCLVKSIRSGYEVM) lie on the Cytoplasmic side of the membrane. Residues 234–238 (GYEVM) carry the Lysosomal targeting motif motif.

This sequence belongs to the tetraspanin (TM4SF) family. Interacts with TIMP1 and ITGB1 and recruits TIMP1 to ITGB1. Interacts with CD9. Identified in a complex with CD9 and ITGB3. Interacts with PMEL. Interacts with KDR/VEGFR2; identified in a complex with ITGB1 and KDR/VEGFR2 and is required to recruit KDR to ITGB1 complexes. Interacts with SYT7. Post-translationally, palmitoylated at a low, basal level in unstimulated platelets. The level of palmitoylation increases when platelets are activated by thrombin (in vitro). As to expression, detected in platelets (at protein level). Dysplastic nevi, radial growth phase primary melanomas, hematopoietic cells, tissue macrophages.

Its subcellular location is the cell membrane. It is found in the lysosome membrane. It localises to the late endosome membrane. The protein localises to the endosome. The protein resides in the multivesicular body. Its subcellular location is the melanosome. It is found in the secreted. It localises to the extracellular exosome. The protein localises to the cell surface. In terms of biological role, functions as a cell surface receptor for TIMP1 and plays a role in the activation of cellular signaling cascades. Plays a role in the activation of ITGB1 and integrin signaling, leading to the activation of AKT, FAK/PTK2 and MAP kinases. Promotes cell survival, reorganization of the actin cytoskeleton, cell adhesion, spreading and migration, via its role in the activation of AKT and FAK/PTK2. Plays a role in VEGFA signaling via its role in regulating the internalization of KDR/VEGFR2. Plays a role in intracellular vesicular transport processes, and is required for normal trafficking of the PMEL luminal domain that is essential for the development and maturation of melanocytes. Plays a role in the adhesion of leukocytes onto endothelial cells via its role in the regulation of SELP trafficking. May play a role in mast cell degranulation in response to Ms4a2/FceRI stimulation, but not in mast cell degranulation in response to other stimuli. In Homo sapiens (Human), this protein is CD63 antigen (CD63).